The chain runs to 458 residues: MSSGRIVQIIGAVIDVEFPRDSVPSIYDALKVQGAETTLEVQQQLGDGVVRTIAMGSTEGLKRGLDVNNTGAAISVPVGKATLGRIMDVLGNPIDEAGPIGEEERWGIHRPAPSFAEQAGGNDLLETGIKVIDLVCPFAKGGKVGLFGGAGVGKTVNMMELIRNIAIEHSGYSVFAGVGERTREGNDFYHEMKDSNVLDKVALVYGQMNEPPGNRLRVALTGLTMAEKFRDEGNDVLLFVDNIYRYTLAGTEVSALLGRMPSAVGYQPTLAEEMGVLQERITSTKQGSITSIQAVYVPADDLTDPSPATTFAHLDATVVLSRDIASLGIYPAVDPLDSTSRQLDPNVIGNEHYETARGVQYVLQRYKELKDIIAILGMDELSETDKQLVSRARKIQRFLSQPFFVAEVFTGSPGKYVSLKDTIAGFKGILNGDYDHLPEQAFYMVGGIDEAIEKAKKL.

G148–T155 lines the ATP pocket.

The protein belongs to the ATPase alpha/beta chains family. F-type ATPases have 2 components, CF(1) - the catalytic core - and CF(0) - the membrane proton channel. CF(1) has five subunits: alpha(3), beta(3), gamma(1), delta(1), epsilon(1). CF(0) has three main subunits: a(1), b(2) and c(9-12). The alpha and beta chains form an alternating ring which encloses part of the gamma chain. CF(1) is attached to CF(0) by a central stalk formed by the gamma and epsilon chains, while a peripheral stalk is formed by the delta and b chains.

The protein resides in the cell inner membrane. The enzyme catalyses ATP + H2O + 4 H(+)(in) = ADP + phosphate + 5 H(+)(out). Its function is as follows. Produces ATP from ADP in the presence of a proton gradient across the membrane. The catalytic sites are hosted primarily by the beta subunits. The chain is ATP synthase subunit beta from Pseudomonas fluorescens (strain ATCC BAA-477 / NRRL B-23932 / Pf-5).